An 800-amino-acid polypeptide reads, in one-letter code: Endoglucanase (800 aa).

The first 30 residues, Met1–Ala30, serve as a signal peptide directing secretion. The Proton donor role is filled by Glu190. Catalysis depends on Glu305, which acts as the Nucleophile. Residues Ala761–Glu800 form a disordered region. The segment covering Val767–Pro780 has biased composition (acidic residues). Over residues Val781–Glu800 the composition is skewed to basic and acidic residues.

This sequence belongs to the glycosyl hydrolase 5 (cellulase A) family.

The enzyme catalyses Endohydrolysis of (1-&gt;4)-beta-D-glucosidic linkages in cellulose, lichenin and cereal beta-D-glucans.. The polypeptide is Endoglucanase (Halalkalibacter akibai (strain ATCC 43226 / DSM 21942 / CIP 109018 / JCM 9157 / 1139) (Bacillus akibai)).